Here is a 495-residue protein sequence, read N- to C-terminus: Glycerol kinase (495 aa).

Position 11 (threonine 11) interacts with ADP. Residues threonine 11, threonine 12, and serine 13 each contribute to the ATP site. Position 11 (threonine 11) interacts with sn-glycerol 3-phosphate. ADP is bound at residue arginine 15. Residues arginine 81, glutamate 82, tyrosine 133, and aspartate 242 each coordinate sn-glycerol 3-phosphate. Arginine 81, glutamate 82, tyrosine 133, aspartate 242, and glutamine 243 together coordinate glycerol. Positions 264 and 307 each coordinate ADP. Residues threonine 264, glycine 307, glutamine 311, and glycine 408 each coordinate ATP. Glycine 408 and asparagine 412 together coordinate ADP.

Belongs to the FGGY kinase family.

It carries out the reaction glycerol + ATP = sn-glycerol 3-phosphate + ADP + H(+). It participates in polyol metabolism; glycerol degradation via glycerol kinase pathway; sn-glycerol 3-phosphate from glycerol: step 1/1. Its activity is regulated as follows. Inhibited by fructose 1,6-bisphosphate (FBP). In terms of biological role, key enzyme in the regulation of glycerol uptake and metabolism. Catalyzes the phosphorylation of glycerol to yield sn-glycerol 3-phosphate. This is Glycerol kinase from Citrifermentans bemidjiense (strain ATCC BAA-1014 / DSM 16622 / JCM 12645 / Bem) (Geobacter bemidjiensis).